An 848-amino-acid polypeptide reads, in one-letter code: MSSGANITYASRKRRKPVQKTVKPIPAEGIKSNPSKRHRDRLNTELDRLASLLPFPQDVINKLDKLSVLRLSVSYLRAKSFFDVALKSTPADRNGGQDQCRAQIRDWQDLQEGEFLLQALNGFVLVVTADALVFYASSTIQDYLGFQQSDVIHQSVYELIHTEDRAEFQRQLHWALNPDSAQGVDEAHGPPQAAVYYTPDQLPPENASFMERCFRCRLRCLLDNSSGFLAMNFQGRLKYLHGQNKKGKDGALLPPQLALFAIATPLQPPSILEIRTKNFIFRTKHKLDFTPIGCDAKGQLILGYTEVELCTRGSGYQFIHAADMLHCAESHIRMIKTGESGMTVFRLFAKHSRWRWVQSNARLIYRNGRPDYIIATQRPLTDEEGREHLQKRSTSLPFMFATGEAVLYEISSPFSPIMDPLPIRTKSNTSRKDWAPQSTPSKDSFHPSSLMSALIQQDESIYLCPPSSPAPLDSHFLMGSVSKCGSWQDSFAAAGSEAALKHEQIGHAQDVNLALSGGPSELFPDNKNNDLYNIMRNLGIDFEDIRSMQNEEFFRTDSTAAGEVDFKDIDITDEILTYVQDSLNNSTLMNSACQQQPVTQHLSCMLQERLQLEQQQQLQQPPPQALEPQQQLCQMVCPQQDLGPKHTQINGTFASWNPTPPVSFNCPQQELKHYQLFSSLQGTAQEFPYKPEVDSVPYTQNFAPCNQPLLPEHSKSVQLDFPGRDFEPSLHPTTSNLDFVSCLQVPENQSHGINSQSTMVSPQAYYAGAMSMYQCQPGPQRTPVDQTQYSSEIPGSQAFLSKVQSRGIFNETYSSDLSSIGHAAQTTGHLHHLAEARPLPDITPGGFL.

Positions 1–9 (MSSGANITY) are excised as a propeptide. Residues 1-38 (MSSGANITYASRKRRKPVQKTVKPIPAEGIKSNPSKRH) form a disordered region. 2 short sequence motifs (nuclear localization signal) span residues 12-15 (RKRR) and 36-41 (KRHRDR). A bHLH domain is found at 26–79 (PAEGIKSNPSKRHRDRLNTELDRLASLLPFPQDVINKLDKLSVLRLSVSYLRAK). The tract at residues 37 to 65 (RHRDRLNTELDRLASLLPFPQDVINKLDK) is DNA-binding. Required for maintaining the overall integrity of the AHR:ARNT heterodimer and its transcriptional activity stretches follow at residues 49-81 (LASL…AKSF), 116-124 (LLQALNGFV), and 260-262 (FAI). Positions 63 to 71 (LDKLSVLRL) match the Nuclear export signal motif. The 64-residue stretch at 116-179 (LLQALNGFVL…RQLHWALNPD (64 aa)) folds into the PAS 1 domain. The PAS 2 domain maps to 269 to 336 (PSILEIRTKN…CAESHIRMIK (68 aa)). A PAC domain is found at 342 to 380 (MTVFRLFAKHSRWRWVQSNARLIYRNGRPDYIIATQRPL). Positions 421–449 (LPIRTKSNTSRKDWAPQSTPSKDSFHPSS) are disordered. Residues 436–449 (PQSTPSKDSFHPSS) show a composition bias toward polar residues.

As to quaternary structure, homodimer. Heterodimer; efficient DNA binding requires dimerization with another bHLH protein. Interacts with ARNT; the heterodimer ARNT:AHR binds to core DNA sequence 5'-TGCGTG-3' within the dioxin response element (DRE) of target gene promoters and activates their transcription. Binds MYBBP1A. Interacts with coactivators including SRC-1, RIP140 and NOCA7, and with the corepressor SMRT. Interacts with NEDD8 and IVNS1ABP. Interacts with BMAL1. Interacts with HSP90AB1. Interacts with TIPARP; leading to mono-ADP-ribosylation of AHR and subsequent inhibition of AHR. Mono-ADP-ribosylated, leading to inhibit transcription activator activity of AHR. In terms of tissue distribution, expressed in all tissues tested including brain, heart, kidney, liver, lung, muscle, ovary, skin, spleen and thymus.

Its subcellular location is the cytoplasm. It localises to the nucleus. Ligand-activated transcription factor that enables cells to adapt to changing conditions by sensing compounds from the environment, diet, microbiome and cellular metabolism, and which plays important roles in development, immunity and cancer. Upon ligand binding, translocates into the nucleus, where it heterodimerizes with ARNT and induces transcription by binding to xenobiotic response elements (XRE). Regulates a variety of biological processes, including angiogenesis, hematopoiesis, drug and lipid metabolism, cell motility and immune modulation. Xenobiotics can act as ligands: upon xenobiotic-binding, activates the expression of multiple phase I and II xenobiotic chemical metabolizing enzyme genes (such as the CYP1A1 gene). Mediates biochemical and toxic effects of halogenated aromatic hydrocarbons. Next to xenobiotics, natural ligands derived from plants, microbiota, and endogenous metabolism are potent AHR agonists. Tryptophan (Trp) derivatives constitute an important class of endogenous AHR ligands. Acts as a negative regulator of anti-tumor immunity: indoles and kynurenic acid generated by Trp catabolism act as ligand and activate AHR, thereby promoting AHR-driven cancer cell motility and suppressing adaptive immunity. Regulates the circadian clock by inhibiting the basal and circadian expression of the core circadian component PER1. Inhibits PER1 by repressing the CLOCK-BMAL1 heterodimer mediated transcriptional activation of PER1. The heterodimer ARNT:AHR binds to core DNA sequence 5'-TGCGTG-3' within the dioxin response element (DRE) of target gene promoters and activates their transcription. This chain is Aryl hydrocarbon receptor (Ahr), found in Mus musculus (Mouse).